A 280-amino-acid polypeptide reads, in one-letter code: Golgi phosphoprotein 3-like (280 aa).

The interval 1-30 (MTTLTRRGRRADVGQENRVDSEDYIKDKDE) is disordered. Positions 10 to 30 (RADVGQENRVDSEDYIKDKDE) are enriched in basic and acidic residues. 4 residues coordinate a 1,2-diacyl-sn-glycero-3-phospho-(1D-myo-inositol 4-phosphate): tryptophan 62, arginine 71, arginine 152, and arginine 155. Residues 171 to 182 (EKQNFLLFDMTT) are beta-hairpin required for oligomerization.

Belongs to the GOLPH3/VPS74 family. As to quaternary structure, homooligomer.

Its subcellular location is the golgi apparatus. The protein localises to the golgi stack membrane. It localises to the trans-Golgi network membrane. Its function is as follows. Phosphatidylinositol-4-phosphate-binding protein that may play a role in the process of vesicle budding at the Golgi and anterograde transport to the plasma membrane. This Xenopus tropicalis (Western clawed frog) protein is Golgi phosphoprotein 3-like (golph3l).